Reading from the N-terminus, the 226-residue chain is Ribosome-recycling factor, mitochondrial (226 aa).

The protein belongs to the RRF family.

The protein resides in the mitochondrion. In terms of biological role, necessary for protein synthesis in mitochondria. Functions as a ribosome recycling factor in mitochondria. The polypeptide is Ribosome-recycling factor, mitochondrial (RRF1) (Eremothecium gossypii (strain ATCC 10895 / CBS 109.51 / FGSC 9923 / NRRL Y-1056) (Yeast)).